A 617-amino-acid polypeptide reads, in one-letter code: UvrABC system protein C (617 aa).

In terms of domain architecture, GIY-YIG spans 22–100 (KLPGVYRFFD…IKALSPKYNI (79 aa)). A UVR domain is found at 209-244 (DELTRTLQHKMQTAAANLQFEEAARYRDQIQALGIM).

The protein belongs to the UvrC family. In terms of assembly, interacts with UvrB in an incision complex.

Its subcellular location is the cytoplasm. Its function is as follows. The UvrABC repair system catalyzes the recognition and processing of DNA lesions. UvrC both incises the 5' and 3' sides of the lesion. The N-terminal half is responsible for the 3' incision and the C-terminal half is responsible for the 5' incision. This chain is UvrABC system protein C, found in Neisseria meningitidis serogroup A / serotype 4A (strain DSM 15465 / Z2491).